The following is a 189-amino-acid chain: Segregation and condensation protein B (189 aa).

It belongs to the ScpB family. Homodimer. Homodimerization may be required to stabilize the binding of ScpA to the Smc head domains. Component of a cohesin-like complex composed of ScpA, ScpB and the Smc homodimer, in which ScpA and ScpB bind to the head domain of Smc. The presence of the three proteins is required for the association of the complex with DNA.

The protein localises to the cytoplasm. Participates in chromosomal partition during cell division. May act via the formation of a condensin-like complex containing Smc and ScpA that pull DNA away from mid-cell into both cell halves. The protein is Segregation and condensation protein B of Lachnoclostridium phytofermentans (strain ATCC 700394 / DSM 18823 / ISDg) (Clostridium phytofermentans).